A 133-amino-acid polypeptide reads, in one-letter code: ATP synthase epsilon chain (133 aa).

It belongs to the ATPase epsilon chain family. F-type ATPases have 2 components, CF(1) - the catalytic core - and CF(0) - the membrane proton channel. CF(1) has five subunits: alpha(3), beta(3), gamma(1), delta(1), epsilon(1). CF(0) has three main subunits: a, b and c.

It is found in the cell membrane. Functionally, produces ATP from ADP in the presence of a proton gradient across the membrane. In Mycoplasma genitalium (strain ATCC 33530 / DSM 19775 / NCTC 10195 / G37) (Mycoplasmoides genitalium), this protein is ATP synthase epsilon chain (atpC).